Here is a 194-residue protein sequence, read N- to C-terminus: uncharacterized protein (194 aa).

It to A.aeolicus AQ_423.

This is an uncharacterized protein from Aquifex aeolicus (strain VF5).